Reading from the N-terminus, the 205-residue chain is Lymphotoxin-alpha (205 aa).

An N-terminal signal peptide occupies residues 1–34 (MTPPGRLYLPRVRGTRLLFLLLGLLLALPPRAKG). The THD domain occupies 63-205 (PAAHLVGDPS…SSVFFGAFAL (143 aa)). The N-linked (GlcNAc...) asparagine glycan is linked to N96. Cysteines 120 and 156 form a disulfide.

Belongs to the tumor necrosis factor family. In terms of assembly, homotrimer, and heterotrimer of either two LTB and one LTA subunits or (less prevalent) two LTA and one LTB subunits. Interacts with TNFRSF14.

It is found in the secreted. The protein resides in the membrane. Functionally, cytokine that in its homotrimeric form binds to TNFRSF1A/TNFR1, TNFRSF1B/TNFBR and TNFRSF14/HVEM. In its heterotrimeric form with LTB binds to TNFRSF3/LTBR. Lymphotoxin is produced by lymphocytes and is cytotoxic for a wide range of tumor cells in vitro and in vivo. The sequence is that of Lymphotoxin-alpha (LTA) from Marmota monax (Woodchuck).